The following is a 241-amino-acid chain: Major prion protein (241 aa).

Residues 1 to 15 (MLVLFVATWSDLGLC) form the signal peptide. The segment at 16-31 (KKRPKPGGWNTGGSRY) is interaction with ADGRG6. An interaction with GRB2, ERI3 and SYN1 region spans residues 16–223 (KKRPKPGGWN…ESQAYYQRGS (208 aa)). The disordered stretch occupies residues 18–100 (RPKPGGWNTG…QWNKPSKPKT (83 aa)). 5 tandem repeats follow at residues 44 to 52 (PQGGGSWGQ), 53 to 60 (PHGGGWGQ), 61 to 68 (PHGGGWGQ), 69 to 76 (PHGGGWGQ), and 77 to 84 (PHGGGWGQ). Residues 44–84 (PQGGGSWGQPHGGGWGQPHGGGWGQPHGGGWGQPHGGGWGQ) form a 5 X 8 AA tandem repeats of P-H-G-G-G-W-G-Q region. Over residues 45 to 88 (QGGGSWGQPHGGGWGQPHGGGWGQPHGGGWGQPHGGGWGQGGGT) the composition is skewed to gly residues. Cu(2+)-binding residues include histidine 54, glycine 55, glycine 56, histidine 62, glycine 63, glycine 64, histidine 70, glycine 71, glycine 72, histidine 78, glycine 79, and glycine 80. Cysteine 172 and cysteine 207 are joined by a disulfide. Residues asparagine 174 and asparagine 190 are each glycosylated (N-linked (GlcNAc...) asparagine). The GPI-anchor amidated serine moiety is linked to residue serine 223. A propeptide spans 224 to 241 (SMVLFSSPPVILLISFLI) (removed in mature form).

Belongs to the prion family. Monomer and homodimer. Has a tendency to aggregate into amyloid fibrils containing a cross-beta spine, formed by a steric zipper of superposed beta-strands. Soluble oligomers may represent an intermediate stage on the path to fibril formation. Copper binding may promote oligomerization. Interacts with GRB2, APP, ERI3/PRNPIP and SYN1. Mislocalized cytosolically exposed PrP interacts with MGRN1; this interaction alters MGRN1 subcellular location and causes lysosomal enlargement. Interacts with APP. Interacts with KIAA1191. Interacts with ADGRG6.

It localises to the cell membrane. The protein resides in the golgi apparatus. Its function is as follows. Its primary physiological function is unclear. May play a role in neuronal development and synaptic plasticity. May be required for neuronal myelin sheath maintenance. May promote myelin homeostasis through acting as an agonist for ADGRG6 receptor. May play a role in iron uptake and iron homeostasis. Soluble oligomers are toxic to cultured neuroblastoma cells and induce apoptosis (in vitro). Association with GPC1 (via its heparan sulfate chains) targets PRNP to lipid rafts. Also provides Cu(2+) or Zn(2+) for the ascorbate-mediated GPC1 deaminase degradation of its heparan sulfate side chains. The chain is Major prion protein (PRNP) from Plecturocebus moloch (Dusky titi monkey).